The primary structure comprises 129 residues: Large ribosomal subunit protein uL22 (129 aa).

Belongs to the universal ribosomal protein uL22 family. As to quaternary structure, part of the 50S ribosomal subunit.

Its function is as follows. This protein binds specifically to 23S rRNA; its binding is stimulated by other ribosomal proteins, e.g. L4, L17, and L20. It is important during the early stages of 50S assembly. It makes multiple contacts with different domains of the 23S rRNA in the assembled 50S subunit and ribosome. In terms of biological role, the globular domain of the protein is located near the polypeptide exit tunnel on the outside of the subunit, while an extended beta-hairpin is found that lines the wall of the exit tunnel in the center of the 70S ribosome. The chain is Large ribosomal subunit protein uL22 from Brucella suis biovar 1 (strain 1330).